We begin with the raw amino-acid sequence, 441 residues long: Vacuolar cation/proton exchanger 5 (441 aa).

The N-myristoyl glycine moiety is linked to residue Gly2. Residues 2–69 lie on the Cytoplasmic side of the membrane; it reads GCCKVPALIQ…PNNSVLQSFK (68 aa). S-palmitoyl cysteine attachment occurs at residues Cys3 and Cys4. Residues 70 to 90 form a helical membrane-spanning segment; the sequence is IVILSNKLNLLLPFGPLAILL. At 91–97 the chain is on the extracellular side; the sequence is HYLTDNK. A helical membrane pass occupies residues 98 to 118; that stretch reads GWIFLLSLVGITPLAERLGYA. Topologically, residues 119–129 are cytoplasmic; that stretch reads TEQLACYTGST. Residues 130–150 traverse the membrane as a helical segment; that stretch reads VGGLLNATFGNVTELIISIFA. The tract at residues 139–174 is cation selection; that stretch reads GNVTELIISIFALKSGMIRVVQLTLLGSILSNMLLV. Topologically, residues 151-165 are extracellular; that stretch reads LKSGMIRVVQLTLLG. Residues 166 to 186 form a helical membrane-spanning segment; that stretch reads SILSNMLLVLGCAFFCGGLVF. Over 187–197 the chain is Cytoplasmic; sequence SQKEQVFDKGN. Residues 198–218 form a helical membrane-spanning segment; it reads AVVNSGLLLMAVMGLLFPAVL. Residues 219–231 lie on the Extracellular side of the membrane; it reads HYTHSEVHAGSSE. A helical membrane pass occupies residues 232-252; the sequence is LALSRFSSCIMLVAYAAYLFF. At 253 to 286 the chain is on the cytoplasmic side; it reads QLKSQPSSYTPLTEETNQNEETSDDDEDPEISKW. Residues 287–307 traverse the membrane as a helical segment; that stretch reads EAIIWLSILTAWVSLLSGYLV. The Extracellular segment spans residues 308–311; it reads DAIE. The chain crosses the membrane as a helical span at residues 312–332; that stretch reads GASVSWKIPISFISVILLPIV. At 333-354 the chain is on the cytoplasmic side; the sequence is GNAAEHAGAIMFAMKDKLDLSL. A cation selection region spans residues 333–368; the sequence is GNAAEHAGAIMFAMKDKLDLSLGVAIGSSIQISMFA. Residues 355 to 375 traverse the membrane as a helical segment; the sequence is GVAIGSSIQISMFAVPFCVVI. Residues 376 to 384 are Extracellular-facing; sequence GWMMGAQMD. The helical transmembrane segment at 385-405 threads the bilayer; that stretch reads LNFQLFETATLFITVIVVAFF. Topologically, residues 406–412 are cytoplasmic; that stretch reads LQEGTSN. A helical membrane pass occupies residues 413–433; that stretch reads YFKGLMLILCYLIVAASFFVH. The Extracellular segment spans residues 434–441; it reads EDPHQDDI.

This sequence belongs to the Ca(2+):cation antiporter (CaCA) (TC 2.A.19) family. Cation/proton exchanger (CAX) subfamily.

The protein resides in the vacuole membrane. In terms of biological role, vacuolar cation/proton exchanger (CAX). Translocates Ca(2+) and other metal ions into vacuoles using the proton gradient formed by H(+)-ATPase and H(+)-pyrophosphatase. The polypeptide is Vacuolar cation/proton exchanger 5 (CAX5) (Arabidopsis thaliana (Mouse-ear cress)).